The chain runs to 433 residues: ATP-dependent protease ATPase subunit HslU (433 aa).

ATP-binding positions include Val-18, 60–65 (GVGKTE), Asp-246, Glu-311, and Arg-383.

This sequence belongs to the ClpX chaperone family. HslU subfamily. As to quaternary structure, a double ring-shaped homohexamer of HslV is capped on each side by a ring-shaped HslU homohexamer. The assembly of the HslU/HslV complex is dependent on binding of ATP.

The protein resides in the cytoplasm. Its function is as follows. ATPase subunit of a proteasome-like degradation complex; this subunit has chaperone activity. The binding of ATP and its subsequent hydrolysis by HslU are essential for unfolding of protein substrates subsequently hydrolyzed by HslV. HslU recognizes the N-terminal part of its protein substrates and unfolds these before they are guided to HslV for hydrolysis. This Rhodopseudomonas palustris (strain BisA53) protein is ATP-dependent protease ATPase subunit HslU.